Here is a 231-residue protein sequence, read N- to C-terminus: Phosphatidylserine decarboxylase proenzyme (231 aa).

Ser200 serves as the catalytic Schiff-base intermediate with substrate; via pyruvic acid. Pyruvic acid (Ser); by autocatalysis is present on Ser200.

The protein belongs to the phosphatidylserine decarboxylase family. PSD-A subfamily. As to quaternary structure, heterodimer of a large membrane-associated beta subunit and a small pyruvoyl-containing alpha subunit. Pyruvate serves as cofactor. Post-translationally, is synthesized initially as an inactive proenzyme. Formation of the active enzyme involves a self-maturation process in which the active site pyruvoyl group is generated from an internal serine residue via an autocatalytic post-translational modification. Two non-identical subunits are generated from the proenzyme in this reaction, and the pyruvate is formed at the N-terminus of the alpha chain, which is derived from the carboxyl end of the proenzyme. The post-translation cleavage follows an unusual pathway, termed non-hydrolytic serinolysis, in which the side chain hydroxyl group of the serine supplies its oxygen atom to form the C-terminus of the beta chain, while the remainder of the serine residue undergoes an oxidative deamination to produce ammonia and the pyruvoyl prosthetic group on the alpha chain.

Its subcellular location is the cell membrane. The catalysed reaction is a 1,2-diacyl-sn-glycero-3-phospho-L-serine + H(+) = a 1,2-diacyl-sn-glycero-3-phosphoethanolamine + CO2. The protein operates within phospholipid metabolism; phosphatidylethanolamine biosynthesis; phosphatidylethanolamine from CDP-diacylglycerol: step 2/2. Its function is as follows. Catalyzes the formation of phosphatidylethanolamine (PtdEtn) from phosphatidylserine (PtdSer). The polypeptide is Phosphatidylserine decarboxylase proenzyme (Mycobacterium tuberculosis (strain ATCC 25177 / H37Ra)).